A 431-amino-acid polypeptide reads, in one-letter code: Enolase (431 aa).

Position 167 (Gln167) interacts with (2R)-2-phosphoglycerate. Glu209 functions as the Proton donor in the catalytic mechanism. Residues Asp246, Glu287, and Asp314 each coordinate Mg(2+). (2R)-2-phosphoglycerate is bound by residues Lys339, Arg368, Ser369, and Lys390. Lys339 serves as the catalytic Proton acceptor.

Belongs to the enolase family. Mg(2+) serves as cofactor.

Its subcellular location is the cytoplasm. The protein localises to the secreted. It is found in the cell surface. The enzyme catalyses (2R)-2-phosphoglycerate = phosphoenolpyruvate + H2O. It participates in carbohydrate degradation; glycolysis; pyruvate from D-glyceraldehyde 3-phosphate: step 4/5. In terms of biological role, catalyzes the reversible conversion of 2-phosphoglycerate (2-PG) into phosphoenolpyruvate (PEP). It is essential for the degradation of carbohydrates via glycolysis. In Prochlorococcus marinus (strain MIT 9303), this protein is Enolase.